A 325-amino-acid chain; its full sequence is Tetraacyldisaccharide 4'-kinase (325 aa).

55-62 (TAGGNGKT) lines the ATP pocket.

Belongs to the LpxK family.

It carries out the reaction a lipid A disaccharide + ATP = a lipid IVA + ADP + H(+). Its pathway is glycolipid biosynthesis; lipid IV(A) biosynthesis; lipid IV(A) from (3R)-3-hydroxytetradecanoyl-[acyl-carrier-protein] and UDP-N-acetyl-alpha-D-glucosamine: step 6/6. In terms of biological role, transfers the gamma-phosphate of ATP to the 4'-position of a tetraacyldisaccharide 1-phosphate intermediate (termed DS-1-P) to form tetraacyldisaccharide 1,4'-bis-phosphate (lipid IVA). This Salmonella newport (strain SL254) protein is Tetraacyldisaccharide 4'-kinase.